The sequence spans 177 residues: Inner membrane-spanning protein YciB (177 aa).

The next 5 membrane-spanning stretches (helical) occupy residues 23 to 43, 50 to 70, 73 to 93, 119 to 139, and 149 to 169; these read MFVATGVAIAATAVMVAWAWF, TMQWISLGLIVVLGGATLLLH, HFIMWKPTVLYWVMGAGLLIS, LTWAWSGFFAFMGALNLFVAY, and FKLFGGMGLMLLFVIAQSLFL.

It belongs to the YciB family.

Its subcellular location is the cell inner membrane. Functionally, plays a role in cell envelope biogenesis, maintenance of cell envelope integrity and membrane homeostasis. The chain is Inner membrane-spanning protein YciB from Chromobacterium violaceum (strain ATCC 12472 / DSM 30191 / JCM 1249 / CCUG 213 / NBRC 12614 / NCIMB 9131 / NCTC 9757 / MK).